Reading from the N-terminus, the 456-residue chain is MDFEQISCSLLPLLGGKENIASAAHCATRLRLVLVDDSLADQQAIGKVEGVKGCFRNAGQMQIIFGTGVVNKVYAAFTQAAGISESSKSEAADIAAKKLNPFQRIARLLSNIFVPIIPAIVASGLLMGLLGMVKTYGWVDPGNAIYIMLDMCSSAAFIILPILIGFTAAREFGGNPYLGATLGGILTHPALTNAWGVAAGFHTMNFFGFEIAMIGYQGTVFPVLLAVWFMSIVEKQLRRAIPDALDLILTPFLTVIISGFIALLIIGPAGRALGDGISFVLSTLISHAGWLAGLLFGGLYSVIVITGIHHSFHAVEAGLLGNPSIGVNFLLPIWAMANVAQGGACLAVWFKTKDAKIKAITLPSAFSAMLGITEAAIFGINLRFVKPFIAALIGGAAGGAWVVSVHVYMTAVGLTAIPGMAIVQASSLLNYIIGMVIAFGVAFTVSLVLKYKTDAE.

A PTS EIIB type-1 domain is found at E4 to S87. C26 functions as the Phosphocysteine intermediate; for EIIB activity in the catalytic mechanism. A PTS EIIC type-1 domain is found at R107 to E456. Helical transmembrane passes span I112–M132, A144–I164, T181–F201, M213–V233, L247–G267, A288–I308, F329–W349, I360–I380, F388–Y408, and L428–V448.

It localises to the cell inner membrane. It catalyses the reaction N(pros)-phospho-L-histidyl-[protein](out) + sucrose = sucrose 6(G)-phosphate(in) + L-histidyl-[protein]. The phosphoenolpyruvate-dependent sugar phosphotransferase system (sugar PTS), a major carbohydrate active transport system, catalyzes the phosphorylation of incoming sugar substrates concomitantly with their translocation across the cell membrane. This system is involved in sucrose transport. The polypeptide is PTS system sucrose-specific EIIBC component (Salmonella typhimurium).